The chain runs to 465 residues: tRNA-2-methylthio-N(6)-dimethylallyladenosine synthase (465 aa).

Residues 5–125 form the MTTase N-terminal domain; it reads RKLHIKSYGC…LPELLKRAGN (121 aa). [4Fe-4S] cluster is bound by residues C14, C50, C88, C166, C170, and C173. The region spanning 152–384 is the Radical SAM core domain; the sequence is RARGISAFVT…QELIDSQQSA (233 aa). One can recognise a TRAM domain in the interval 387–449; it reads KAAIGSTVDV…RYSFLGELVT (63 aa).

The protein belongs to the methylthiotransferase family. MiaB subfamily. Monomer. [4Fe-4S] cluster serves as cofactor.

The protein resides in the cytoplasm. It catalyses the reaction N(6)-dimethylallyladenosine(37) in tRNA + (sulfur carrier)-SH + AH2 + 2 S-adenosyl-L-methionine = 2-methylsulfanyl-N(6)-dimethylallyladenosine(37) in tRNA + (sulfur carrier)-H + 5'-deoxyadenosine + L-methionine + A + S-adenosyl-L-homocysteine + 2 H(+). Its function is as follows. Catalyzes the methylthiolation of N6-(dimethylallyl)adenosine (i(6)A), leading to the formation of 2-methylthio-N6-(dimethylallyl)adenosine (ms(2)i(6)A) at position 37 in tRNAs that read codons beginning with uridine. The chain is tRNA-2-methylthio-N(6)-dimethylallyladenosine synthase from Bradyrhizobium diazoefficiens (strain JCM 10833 / BCRC 13528 / IAM 13628 / NBRC 14792 / USDA 110).